The following is a 485-amino-acid chain: UDP-N-acetylmuramate--L-alanine ligase (485 aa).

Residue 129 to 135 (GTHGKTT) participates in ATP binding.

Belongs to the MurCDEF family.

It localises to the cytoplasm. It catalyses the reaction UDP-N-acetyl-alpha-D-muramate + L-alanine + ATP = UDP-N-acetyl-alpha-D-muramoyl-L-alanine + ADP + phosphate + H(+). It functions in the pathway cell wall biogenesis; peptidoglycan biosynthesis. Cell wall formation. This Vibrio campbellii (strain ATCC BAA-1116) protein is UDP-N-acetylmuramate--L-alanine ligase.